Reading from the N-terminus, the 152-residue chain is Large ribosomal subunit protein uL15 (152 aa).

The interval Met-1–Val-79 is disordered. The segment covering Gly-22 to Gln-35 has biased composition (gly residues).

The protein belongs to the universal ribosomal protein uL15 family. As to quaternary structure, part of the 50S ribosomal subunit.

Its function is as follows. Binds to the 23S rRNA. The protein is Large ribosomal subunit protein uL15 of Rubrobacter xylanophilus (strain DSM 9941 / JCM 11954 / NBRC 16129 / PRD-1).